We begin with the raw amino-acid sequence, 989 residues long: Phosphoenolpyruvate carboxylase (989 aa).

Active-site residues include His175 and Lys630.

Belongs to the PEPCase type 1 family. Mg(2+) serves as cofactor.

It carries out the reaction oxaloacetate + phosphate = phosphoenolpyruvate + hydrogencarbonate. Its function is as follows. Forms oxaloacetate, a four-carbon dicarboxylic acid source for the tricarboxylic acid cycle. In Prochlorococcus marinus (strain MIT 9312), this protein is Phosphoenolpyruvate carboxylase.